Here is a 289-residue protein sequence, read N- to C-terminus: Probable acetolactate synthase small subunit (289 aa).

Residue serine 34 is modified to Phosphoserine. Residues valine 72–methionine 149 enclose the ACT domain.

Belongs to the acetolactate synthase small subunit family.

It localises to the cytoplasm. Its pathway is amino-acid biosynthesis; L-isoleucine biosynthesis; L-isoleucine from 2-oxobutanoate: step 1/4. It participates in amino-acid biosynthesis; L-valine biosynthesis; L-valine from pyruvate: step 1/4. In terms of biological role, stimulates activity of the acetolactate synthase catalytic subunit ilv1. The polypeptide is Probable acetolactate synthase small subunit (Schizosaccharomyces pombe (strain 972 / ATCC 24843) (Fission yeast)).